The chain runs to 498 residues: MTQYWLGLDCGGSWLKAGLYDREGREAGVQRLPLCALSPQPGWAERDMAELWQCCMAVIRALLTHSGVSGEQIVGIGISAQGKGLFLLDKNDKPLGNAILSSDRRAMEIVRRWQEDGIPEKLYPLTRQTLWTGHPVSLLRWLKEHEPERYAQIGCVMMTHDYLRWCLTGVKGCEESNISESNLYNMSLGEYDPCLTDWLGIAEINHALPPVVGSAEICGEITAQTAALTGLKAGTPVVGGLFDVVSTALCAGIEDEFTLNAVMGTWAVTSGITRGLRDGEAHPYVYGRYVNDGEFIVHEASPTSSGNLEWFTAQWGEISFDEINQAVASLPKAGGDLFFLPFLYGSNAGLEMTSGFYGMQAIHTRAHLLQAIYEGVVFSHMTHLNRMRERFTDVHTLRVTGGPAHSDVWMQMLADVSGLRIELPQVEETGCFGAALAARVGTGVYHNFSEAQRDLRHPVRTLLPDMTAHQLYQKKYQRYQHLIAALQGFHARIKEHTL.

It belongs to the FGGY kinase family. As to quaternary structure, homodimer.

It carries out the reaction L-xylulose + ATP = L-xylulose 5-phosphate + ADP + H(+). The enzyme catalyses 3-dehydro-L-gulonate + ATP = 3-dehydro-L-gulonate 6-phosphate + ADP + H(+). Functionally, catalyzes the phosphorylation of L-xylulose and 3-keto-L-gulonate. Is involved in L-lyxose utilization via xylulose, and may also be involved in the utilization of 2,3-diketo-L-gulonate. The chain is L-xylulose/3-keto-L-gulonate kinase (lyx) from Escherichia coli (strain K12).